The primary structure comprises 305 residues: Sulfate adenylyltransferase subunit 2 (305 aa).

Belongs to the PAPS reductase family. CysD subfamily. In terms of assembly, heterodimer composed of CysD, the smaller subunit, and CysN.

The catalysed reaction is sulfate + ATP + H(+) = adenosine 5'-phosphosulfate + diphosphate. It functions in the pathway sulfur metabolism; hydrogen sulfide biosynthesis; sulfite from sulfate: step 1/3. Functionally, with CysN forms the ATP sulfurylase (ATPS) that catalyzes the adenylation of sulfate producing adenosine 5'-phosphosulfate (APS) and diphosphate, the first enzymatic step in sulfur assimilation pathway. APS synthesis involves the formation of a high-energy phosphoric-sulfuric acid anhydride bond driven by GTP hydrolysis by CysN coupled to ATP hydrolysis by CysD. This chain is Sulfate adenylyltransferase subunit 2, found in Stutzerimonas stutzeri (strain A1501) (Pseudomonas stutzeri).